We begin with the raw amino-acid sequence, 379 residues long: MEKYEKLAKTGEGSYGVVFKCRNKTSGQVVAVKKFVESEDDPVVKKIALREIRMLKQLKHPNLVNLIEVFRRKRKMHLVFEYCDHTLLNELERNPNGVADGVIKSVLWQTLQALNFCHIHNCIHRDIKPENILITKQGIIKICDFGFAQILIPGDAYTDYVATRWYRAPELLVGDTQYGSSVDIWAIGCVFAELLTGQPLWPGKSDVDQLYLIIRTLGKLIPRHQSIFKSNGFFHGISIPEPEDMETLEEKFSDVHPVALNFMKGCLKMNPDDRLTCSQLLESSYFDSFQEAQIKRKARNEGRNRRRQQQAPKSAFPRLFLKTKICQVQRNETQTSGNQILPNGPILQNSMVTVMTNINSAVYQVTVLHLLSENFEVKS.

Residues 4 to 286 (YEKLAKTGEG…CSQLLESSYF (283 aa)) form the Protein kinase domain. Residues 10–18 (TGEGSYGVV) and Lys-33 each bind ATP. The [NKR]KIAxRE motif lies at 45–51 (KKIALRE). Asp-126 (proton acceptor) is an active-site residue.

This sequence belongs to the protein kinase superfamily. CMGC Ser/Thr protein kinase family. CDC2/CDKX subfamily.

Its subcellular location is the cytoplasm. The enzyme catalyses L-seryl-[protein] + ATP = O-phospho-L-seryl-[protein] + ADP + H(+). The catalysed reaction is L-threonyl-[protein] + ATP = O-phospho-L-threonyl-[protein] + ADP + H(+). The protein is Cyclin-dependent kinase-like 4 (CDKL4) of Homo sapiens (Human).